The chain runs to 388 residues: 3-amino-5-hydroxybenzoate synthase (388 aa).

N6-(pyridoxal phosphate)lysine is present on lysine 188.

Belongs to the degT/dnrJ/eryC1 family. Homodimer. Can interact with RifL. Pyridoxal 5'-phosphate serves as cofactor.

It catalyses the reaction 5-deoxy-5-amino-3-dehydroshikimate = 3-amino-5-hydroxybenzoate + H2O + H(+). It carries out the reaction UDP-3-oxo-alpha-D-glucose + L-glutamine = UDP-alpha-D-kanosamine + 2-oxoglutaramate. Its pathway is antibiotic biosynthesis; rifamycin B biosynthesis. AHBA synthase activity is activated by 3-deoxy-D-arabinoheptulosonic acid 7-phosphate (DAHP), an intermediate in the shikimate pathway, and is irreversibly inhibited by gabaculine (5-amino-1,3-cyclohexadiene-1-carboxylate). Functionally, catalyzes the dehydration and aromatization of 5-amino-5-deoxy-3-dehydroshikimate (aminoDHS) to 3-amino-5-hydroxybenzoate (AHBA), a compound that then serves as the starter unit for the assembly of a polyketide during the biosynthesis of rifamycin B and other ansamycin antibiotics. Cannot utilize 5-deoxy-5-amino-3-dehydroquinate (aminoDHQ), 5-deoxy-5-aminoshikimate (aminoSA), quinate, 3-dehydroquinate, or 3-dehydroshikimate (DHS) as substrate. In a complex with RifL, RifK may have a second function in the AHBA pathway, acting as a transaminase introducing the nitrogen into the first pathway intermediate, UDP-3-keto-D-glucose, to give UDP-kanosamine. Appears to use glutamine as the nitrogen donor; NH(4)(+) or asparagine are 30% less effective as nitrogen donors and neither glutamate nor aspartate show activity. The sequence is that of 3-amino-5-hydroxybenzoate synthase (rifK) from Amycolatopsis mediterranei (strain S699) (Nocardia mediterranei).